The following is a 317-amino-acid chain: Transaldolase (317 aa).

Lysine 132 (schiff-base intermediate with substrate) is an active-site residue.

The protein belongs to the transaldolase family. Type 1 subfamily. As to quaternary structure, homodimer.

The protein resides in the cytoplasm. It catalyses the reaction D-sedoheptulose 7-phosphate + D-glyceraldehyde 3-phosphate = D-erythrose 4-phosphate + beta-D-fructose 6-phosphate. The protein operates within carbohydrate degradation; pentose phosphate pathway; D-glyceraldehyde 3-phosphate and beta-D-fructose 6-phosphate from D-ribose 5-phosphate and D-xylulose 5-phosphate (non-oxidative stage): step 2/3. Functionally, transaldolase is important for the balance of metabolites in the pentose-phosphate pathway. The chain is Transaldolase from Edwardsiella ictaluri (strain 93-146).